The following is a 315-amino-acid chain: Alpha- and gamma-adaptin-binding protein p34 (315 aa).

The disordered stretch occupies residues 197–233; it reads IGSADPCHPEQPHLPAADRTESLSDHRGGASNTTDAQ. Positions 203–224 are enriched in basic and acidic residues; sequence CHPEQPHLPAADRTESLSDHRG. A phosphoserine mark is found at Ser-310 and Ser-311.

In terms of assembly, associated with AP-1 and AP-2 complexes.

It localises to the cytoplasm. Its subcellular location is the cytosol. In terms of biological role, may be involved in endocytic recycling of growth factor receptors such as EGFR. The polypeptide is Alpha- and gamma-adaptin-binding protein p34 (AAGAB) (Pongo abelii (Sumatran orangutan)).